A 218-amino-acid polypeptide reads, in one-letter code: Large ribosomal subunit protein uL3 (218 aa).

The disordered stretch occupies residues 127-167; the sequence is GFSRGPMSHGSKNHREPGSTGAGTTPGRIYPGKRMAGRYGG.

It belongs to the universal ribosomal protein uL3 family. Part of the 50S ribosomal subunit. Forms a cluster with proteins L14 and L19.

Functionally, one of the primary rRNA binding proteins, it binds directly near the 3'-end of the 23S rRNA, where it nucleates assembly of the 50S subunit. The polypeptide is Large ribosomal subunit protein uL3 (Prochlorococcus marinus (strain MIT 9303)).